A 256-amino-acid chain; its full sequence is Type III pantothenate kinase (256 aa).

D7–K14 is an ATP binding site. Substrate-binding positions include Y96 and G103–R106. D105 serves as the catalytic Proton acceptor. ATP is bound at residue T133. Residue T183 coordinates substrate.

Belongs to the type III pantothenate kinase family. Homodimer. Requires NH4(+) as cofactor. K(+) serves as cofactor.

It localises to the cytoplasm. It catalyses the reaction (R)-pantothenate + ATP = (R)-4'-phosphopantothenate + ADP + H(+). The protein operates within cofactor biosynthesis; coenzyme A biosynthesis; CoA from (R)-pantothenate: step 1/5. Catalyzes the phosphorylation of pantothenate (Pan), the first step in CoA biosynthesis. The sequence is that of Type III pantothenate kinase from Verminephrobacter eiseniae (strain EF01-2).